The chain runs to 224 residues: Small ribosomal subunit protein uS3 (224 aa).

Residues 38–106 (IRKFISEKLK…QVHINIVEIK (69 aa)) form the KH type-2 domain.

This sequence belongs to the universal ribosomal protein uS3 family. Part of the 30S ribosomal subunit. Forms a tight complex with proteins S10 and S14.

Binds the lower part of the 30S subunit head. Binds mRNA in the 70S ribosome, positioning it for translation. The polypeptide is Small ribosomal subunit protein uS3 (Lactobacillus acidophilus (strain ATCC 700396 / NCK56 / N2 / NCFM)).